The sequence spans 165 residues: Protein NKG7 (165 aa).

Helical transmembrane passes span 9 to 29 (LLTS…NFWF), 61 to 81 (FCIL…MSCI), 92 to 112 (IVST…MTVY), and 133 to 153 (FYLG…SLGA).

It belongs to the PMP-22/EMP/MP20 family.

The protein localises to the cell membrane. It localises to the cytolytic granule membrane. In terms of biological role, regulates cytotoxic granule exocytosis in effector lymphocytes, thus acting as a critical mediator of inflammation in a broad range of infectious and non-infectious diseases. Essential for cytotoxic degranulation of natural killer (NK) cells and CD8(+) T-cells and for the activation of CD4(+) T-cells following infection. Plays a critical role in CD8(+) T-cell and NK cell-mediated cytolysis of target cells and contributes to the cytolytic activity via the perforin/granzyme pathway by enhancing exocytosis of LAMP1-carrying lytic granules. Contributes to NK cell-mediated control of cancer metastasis. The protein is Protein NKG7 (NKG7) of Bos taurus (Bovine).